Consider the following 184-residue polypeptide: ATP synthase subunit b, chloroplastic (184 aa).

The helical transmembrane segment at 29-49 (TNLINLGVVLGLLVYFGKGVL) threads the bilayer.

The protein belongs to the ATPase B chain family. As to quaternary structure, F-type ATPases have 2 components, F(1) - the catalytic core - and F(0) - the membrane proton channel. F(1) has five subunits: alpha(3), beta(3), gamma(1), delta(1), epsilon(1). F(0) has four main subunits: a(1), b(1), b'(1) and c(10-14). The alpha and beta chains form an alternating ring which encloses part of the gamma chain. F(1) is attached to F(0) by a central stalk formed by the gamma and epsilon chains, while a peripheral stalk is formed by the delta, b and b' chains.

The protein resides in the plastid. Its subcellular location is the chloroplast thylakoid membrane. In terms of biological role, f(1)F(0) ATP synthase produces ATP from ADP in the presence of a proton or sodium gradient. F-type ATPases consist of two structural domains, F(1) containing the extramembraneous catalytic core and F(0) containing the membrane proton channel, linked together by a central stalk and a peripheral stalk. During catalysis, ATP synthesis in the catalytic domain of F(1) is coupled via a rotary mechanism of the central stalk subunits to proton translocation. Functionally, component of the F(0) channel, it forms part of the peripheral stalk, linking F(1) to F(0). The polypeptide is ATP synthase subunit b, chloroplastic (Anthoceros angustus (Hornwort)).